We begin with the raw amino-acid sequence, 370 residues long: UDP-galactose transporter homolog 1 (370 aa).

10 consecutive transmembrane segments (helical) span residues 22 to 42 (ALTLIICVCGLYGTFLTWSIL), 62 to 82 (IIINLIQALFASIIGFIYNYV), 115 to 135 (CNVLKFMILISITSSIASPIG), 145 to 165 (LAYLLAKSCKLIPVMIVHFIF), 175 to 195 (YLVAGLVTLGVILFTMAHVTT), 204 to 224 (TLLGLTYLIGSMILDGLTNST), 242 to 262 (LMSLLNLFIFIWTSLYTIIFH), 280 to 300 (LIDIIGFAICGAIGQVFIFII), 307 to 327 (IILITATVTRKMLSMILSVIL), and 333 to 353 (SWEQWVGVGLVFGGIGLEAFI).

It belongs to the nucleotide-sugar transporter family. SLC35B subfamily.

The protein localises to the endoplasmic reticulum membrane. In terms of biological role, may be involved in specific transport of UDP-Gal from the cytosol to the Golgi lumen. Involved in the maintenance of optimal conditions for the folding of secretory pathway proteins in the endoplasmic reticulum. The chain is UDP-galactose transporter homolog 1 (HUT1) from Candida albicans (strain SC5314 / ATCC MYA-2876) (Yeast).